A 493-amino-acid polypeptide reads, in one-letter code: Na(+)/H(+) antiporter subunit D (493 aa).

14 consecutive transmembrane segments (helical) span residues 4–23 (LVIL…ILFA), 30–52 (RVIS…VDVY), 72–94 (LVAD…VCLF), 107–126 (YYFY…AFLT), 130–149 (FNLF…LIVL), 162–184 (YVVI…YSIT), 204–226 (VLNV…FPLY), 233–255 (YFGP…GIYA), 270–292 (FTHT…GAVS), 299–321 (ILSY…YTQL), 325–347 (GAIY…AGAT), 368–390 (WLAW…SGFF), 405–427 (YIIA…KIFI), and 448–470 (LLLP…EPIF).

This sequence belongs to the CPA3 antiporters (TC 2.A.63) subunit D family. As to quaternary structure, forms a heterooligomeric complex that consists of seven subunits: MrpA, MrpB, MrpC, MrpD, MrpE, MrpF and MrpG.

The protein localises to the cell membrane. Its function is as follows. Mnh complex is a Na(+)Li(+)/H(+) antiporter involved in Na(+) and/or Li(+) excretion and Na(+) resistance. Na(+)/H(+) antiport consumes a transmembrane electrical potential, and is thus inferred to be electrogenic. Does not transport K(+), Ca(2+) or Mg(2+). Functionally, mrp complex is a Na(+)/H(+) antiporter involved in Na(+) excretion and Na(+) resistance. This is Na(+)/H(+) antiporter subunit D (mrpD) from Alkalihalophilus pseudofirmus (strain ATCC BAA-2126 / JCM 17055 / OF4) (Bacillus pseudofirmus).